We begin with the raw amino-acid sequence, 114 residues long: Adapter SH3BGRL (114 aa).

The required for interaction with HER2 stretch occupies residues 13–50 (STAIKKKQQDVLGFLEANKIGFEEKDIAANEENRKWMR). A required for interaction with PFN1, HER2, and ATG12 region spans residues 54–71 (PENSRPATGYPLPPQIFN). The SH3-binding motif lies at 61–67 (TGYPLPP).

Belongs to the SH3BGR family. Monomer. Interacts with PFN1/Profilin-1. Interacts with ERBB2. Interacts with ATG12. Interacts with BECN1. Interacts with translating ribosomes. Ubiquitous.

It is found in the cytoplasm. The protein localises to the cytosol. The protein resides in the cell membrane. Appears to function as an adapter protein that bridges proteins together or proteins with mRNAs. May function as a ubiquitin ligase-substrate adapter. Additionally, associates with translating cytoplasmic ribosomes and may promote the expression of specific mRNAs. The sequence is that of Adapter SH3BGRL from Homo sapiens (Human).